The sequence spans 386 residues: Aspergillopepsin-1 (386 aa).

An N-terminal signal peptide occupies residues 1 to 20; it reads MVVFSKVAAAAFGLSAVASA. A propeptide spans 21-69 (activation peptide); the sequence is MPAAPPRQGFTINQLTRAIPKRTINLPAIYANALSKYGGNVPPHIQDAM. The region spanning 85–383 is the Peptidase A1 domain; that stretch reads YLTPVAVGGT…DSEGPQLGFA (299 aa). Asp101 is an active-site residue. Residue Asn130 is glycosylated (N-linked (GlcNAc...) asparagine). Asp275 is a catalytic residue. A disulfide bridge links Cys311 with Cys346.

The protein belongs to the peptidase A1 family. In terms of assembly, monomer.

Its subcellular location is the secreted. It catalyses the reaction Hydrolysis of proteins with broad specificity. Generally favors hydrophobic residues in P1 and P1', but also accepts Lys in P1, which leads to activation of trypsinogen. Does not clot milk.. Its function is as follows. Secreted aspartic endopeptidase that allows assimilation of proteinaceous substrates. The scissile peptide bond is attacked by a nucleophilic water molecule activated by two aspartic residues in the active site. Shows a broad primary substrate specificity. Favors hydrophobic residues at the P1 and P1' positions, but also accepts a lysine residue in the P1 position, leading to the activation of trypsinogen and chymotrypsinogen A. This chain is Aspergillopepsin-1, found in Emericella nidulans (strain FGSC A4 / ATCC 38163 / CBS 112.46 / NRRL 194 / M139) (Aspergillus nidulans).